A 448-amino-acid chain; its full sequence is D-inositol 3-phosphate glycosyltransferase (448 aa).

Residues 1 to 21 (MAEQHTGVGRQRGARPWPRPR) form a disordered region. His29 lines the 1D-myo-inositol 3-phosphate pocket. UDP-N-acetyl-alpha-D-glucosamine contacts are provided by residues 35–36 (QP) and Gly43. 1D-myo-inositol 3-phosphate contacts are provided by residues 40–45 (DAGGMN), Lys98, Tyr131, Thr155, and Arg175. Residues Arg255, Lys260, and Gln321 each contribute to the UDP-N-acetyl-alpha-D-glucosamine site. The Mg(2+) site is built by Tyr330, Arg331, and Ala333. Positions 343 and 351 each coordinate UDP-N-acetyl-alpha-D-glucosamine. Thr357 lines the Mg(2+) pocket.

This sequence belongs to the glycosyltransferase group 1 family. MshA subfamily. As to quaternary structure, homodimer.

It carries out the reaction 1D-myo-inositol 3-phosphate + UDP-N-acetyl-alpha-D-glucosamine = 1D-myo-inositol 2-acetamido-2-deoxy-alpha-D-glucopyranoside 3-phosphate + UDP + H(+). In terms of biological role, catalyzes the transfer of a N-acetyl-glucosamine moiety to 1D-myo-inositol 3-phosphate to produce 1D-myo-inositol 2-acetamido-2-deoxy-glucopyranoside 3-phosphate in the mycothiol biosynthesis pathway. The chain is D-inositol 3-phosphate glycosyltransferase from Salinispora arenicola (strain CNS-205).